Consider the following 498-residue polypeptide: Zinc finger protein 395 (498 aa).

The tract at residues 129–165 is disordered; that stretch reads QKPLSSPIEQSLPTSPGATSTSAQRSVSRSIDVPKRR. The segment covering 130–157 has biased composition (polar residues); that stretch reads KPLSSPIEQSLPTSPGATSTSAQRSVSR. The Nuclear export signal signature appears at 171-180; sequence MDEMMAAMVL. The disordered stretch occupies residues 209–245; sequence KEGGDVSDSGSSTTSGHWSASSGVSTPSPPHTDASPK. Positions 214–231 are enriched in low complexity; sequence VSDSGSSTTSGHWSASSG. The segment at 285-310 adopts a C2H2-type zinc-finger fold; sequence YKCLWPNCGKLLRSIVGIKRHVKTQH.

It is found in the cytoplasm. Its subcellular location is the nucleus. The protein is Zinc finger protein 395 (znf395) of Xenopus laevis (African clawed frog).